We begin with the raw amino-acid sequence, 89 residues long: UPF0297 protein SMU_2079c (89 aa).

This sequence belongs to the UPF0297 family.

This is UPF0297 protein SMU_2079c from Streptococcus mutans serotype c (strain ATCC 700610 / UA159).